Here is a 981-residue protein sequence, read N- to C-terminus: Transcription factor TAC1 (981 aa).

A compositionally biased stretch (polar residues) spans 1–29 (MDTSSSSGTHPSTFNNLTKQQELTGNDPN). Residues 1–33 (MDTSSSSGTHPSTFNNLTKQQELTGNDPNDTNR) form a disordered region. The segment at residues 40-68 (CDSCRRKKIKCNGSYPCGNCIQAKNTSNC) is a DNA-binding region (zn(2)-C6 fungal-type). 3 disordered regions span residues 74–106 (PVRKKLKPTKQDNKSTANSNGVSKRKYNDTFSG), 165–199 (HSNSSMFNNNSLSPTPSEDFNKSAFDSEEQQTSHS), and 868–902 (LRDNSTNHGQNNMNPSPTITNNTYNSNINTGSNST). A compositionally biased stretch (low complexity) spans 165–177 (HSNSSMFNNNSLS). Positions 868 to 880 (LRDNSTNHGQNNM) are enriched in polar residues. Residues 881–902 (NPSPTITNNTYNSNINTGSNST) are compositionally biased toward low complexity.

In terms of processing, phosphorylated. Phosphorylation leads to hyperactivation.

Its subcellular location is the nucleus. With respect to regulation, drugs such as farnesol and 1-dodecanol are able to hyperactivate TAC1 probably via phosphorylation by the Mediator complex. Transcriptional activator of drug-responsive genes including the ABC-type transporters CDR1 and CDR2, as well as HSP12 and RTA3. Binds the cis-acting regulatory drug-responsive elements (DREs) with the consensus sequence 5'-CGGAWATCGGATATTTTTTT-3' in the promoters of target genes. In Candida albicans (strain SC5314 / ATCC MYA-2876) (Yeast), this protein is Transcription factor TAC1.